The following is a 478-amino-acid chain: Proline--tRNA ligase (478 aa).

This sequence belongs to the class-II aminoacyl-tRNA synthetase family. ProS type 3 subfamily. Homodimer.

It localises to the cytoplasm. It carries out the reaction tRNA(Pro) + L-proline + ATP = L-prolyl-tRNA(Pro) + AMP + diphosphate. Functionally, catalyzes the attachment of proline to tRNA(Pro) in a two-step reaction: proline is first activated by ATP to form Pro-AMP and then transferred to the acceptor end of tRNA(Pro). In Clostridium novyi (strain NT), this protein is Proline--tRNA ligase.